A 681-amino-acid polypeptide reads, in one-letter code: DNA ligase (681 aa).

NAD(+) contacts are provided by residues 33–37 (DGQFD), 83–84 (SL), and E113. Catalysis depends on K115, which acts as the N6-AMP-lysine intermediate. The NAD(+) site is built by R136, E176, K292, and K316. Zn(2+) contacts are provided by C410, C413, C429, and C435. A BRCT domain is found at 599-681 (SIPRNLEGLS…RALLADGPPA (83 aa)).

Belongs to the NAD-dependent DNA ligase family. LigA subfamily. Mg(2+) serves as cofactor. Mn(2+) is required as a cofactor.

It catalyses the reaction NAD(+) + (deoxyribonucleotide)n-3'-hydroxyl + 5'-phospho-(deoxyribonucleotide)m = (deoxyribonucleotide)n+m + AMP + beta-nicotinamide D-nucleotide.. DNA ligase that catalyzes the formation of phosphodiester linkages between 5'-phosphoryl and 3'-hydroxyl groups in double-stranded DNA using NAD as a coenzyme and as the energy source for the reaction. It is essential for DNA replication and repair of damaged DNA. The polypeptide is DNA ligase (Mycobacteroides abscessus (strain ATCC 19977 / DSM 44196 / CCUG 20993 / CIP 104536 / JCM 13569 / NCTC 13031 / TMC 1543 / L948) (Mycobacterium abscessus)).